Consider the following 300-residue polypeptide: Ribosomal protein bS6--L-glutamate ligase (300 aa).

An ATP-grasp domain is found at 104 to 287 (LQLLARQGID…IAGRMIQWIE (184 aa)). Residues lysine 141, 178–179 (EY), aspartate 187, and 211–213 (RSN) contribute to the ATP site. 3 residues coordinate Mg(2+): aspartate 248, glutamate 260, and asparagine 262. 3 residues coordinate Mn(2+): aspartate 248, glutamate 260, and asparagine 262.

It belongs to the RimK family. Requires Mg(2+) as cofactor. Mn(2+) is required as a cofactor.

Functionally, an L-glutamate ligase that catalyzes the ATP-dependent post-translational addition of glutamate residues to the C-terminus of ribosomal protein bS6 (RpsF). Is also able to catalyze the synthesis of poly-alpha-glutamate in vitro, via ATP hydrolysis from unprotected glutamate as substrate. The number of glutamate residues added to either RpsF or to poly-alpha-glutamate changes with pH. The polypeptide is Ribosomal protein bS6--L-glutamate ligase (Salmonella agona (strain SL483)).